A 222-amino-acid polypeptide reads, in one-letter code: Uracil-DNA glycosylase (222 aa).

Asp66 (proton acceptor) is an active-site residue.

It belongs to the uracil-DNA glycosylase (UDG) superfamily. UNG family.

Its subcellular location is the cytoplasm. It catalyses the reaction Hydrolyzes single-stranded DNA or mismatched double-stranded DNA and polynucleotides, releasing free uracil.. Excises uracil residues from the DNA which can arise as a result of misincorporation of dUMP residues by DNA polymerase or due to deamination of cytosine. The chain is Uracil-DNA glycosylase from Porphyromonas gingivalis (strain ATCC BAA-308 / W83).